Reading from the N-terminus, the 817-residue chain is Sorting nexin-29 (817 aa).

The RUN domain occupies serine 37–lysine 181. Residues serine 269, serine 292, serine 293, serine 331, and serine 345 each carry the phosphoserine modification. The segment at aspartate 271–arginine 299 is disordered. 2 disordered regions span residues lysine 344 to glycine 381 and alanine 417 to alanine 460. Over residues aspartate 347–valine 358 the composition is skewed to acidic residues. Over residues glycine 369–leucine 378 the composition is skewed to basic and acidic residues. Low complexity predominate over residues serine 445 to alanine 460. Phosphoserine is present on serine 451. Residues methionine 466–valine 546 adopt a coiled-coil conformation. At serine 641 the chain carries Phosphoserine. Phosphothreonine is present on threonine 643. Serine 644 and serine 648 each carry phosphoserine. Positions alanine 658–glycine 781 constitute a PX domain. The tract at residues leucine 784–leucine 817 is disordered.

It belongs to the sorting nexin family.

The protein is Sorting nexin-29 (SNX29) of Bos taurus (Bovine).